A 352-amino-acid polypeptide reads, in one-letter code: Phosphate acyltransferase (352 aa).

Residues 328 to 339 (ESFPGDAREREG) are compositionally biased toward basic and acidic residues. The segment at 328-352 (ESFPGDAREREGAPAPDAGTERVAS) is disordered.

This sequence belongs to the PlsX family. Homodimer. Probably interacts with PlsY.

The protein resides in the cytoplasm. It carries out the reaction a fatty acyl-[ACP] + phosphate = an acyl phosphate + holo-[ACP]. The protein operates within lipid metabolism; phospholipid metabolism. Functionally, catalyzes the reversible formation of acyl-phosphate (acyl-PO(4)) from acyl-[acyl-carrier-protein] (acyl-ACP). This enzyme utilizes acyl-ACP as fatty acyl donor, but not acyl-CoA. This Citrifermentans bemidjiense (strain ATCC BAA-1014 / DSM 16622 / JCM 12645 / Bem) (Geobacter bemidjiensis) protein is Phosphate acyltransferase.